The following is a 507-amino-acid chain: Tabersonine/lochnericine 19-hydroxylase (507 aa).

Residues 8-28 (FFVLLLPFFIGIAFIYKLWNF) traverse the membrane as a helical segment. An N-linked (GlcNAc...) asparagine glycan is attached at N167. C447 lines the heme pocket.

Belongs to the cytochrome P450 family. Heme serves as cofactor. Confined to roots.

The protein localises to the endoplasmic reticulum membrane. The enzyme catalyses (-)-tabersonine + reduced [NADPH--hemoprotein reductase] + O2 = (-)-(R)-19-hydroxytabersonine + oxidized [NADPH--hemoprotein reductase] + H2O + H(+). It catalyses the reaction lochnericine + reduced [NADPH--hemoprotein reductase] + O2 = horhammericine + oxidized [NADPH--hemoprotein reductase] + H2O + H(+). The catalysed reaction is (-)-vincadifformine + reduced [NADPH--hemoprotein reductase] + O2 = (-)-minovincinine + oxidized [NADPH--hemoprotein reductase] + H2O + H(+). Its pathway is alkaloid biosynthesis. Its function is as follows. Component of the monoterpenoid indole alkaloids (MIAs, e.g. echitovenine, tabersonine, lochnericine, 19-hydroxytabersonine and horhammericine) biosynthetic pathway; MIAs are used in cancer treatment and other medical applications. Cytochrome P450 catalyzing the conversion of (-)-tabersonine to 19-hydroxytabersonine, of lochnericine to horhammericine and of (-)-vincadifformine to (-)-minovincinine. In Catharanthus roseus (Madagascar periwinkle), this protein is Tabersonine/lochnericine 19-hydroxylase.